Consider the following 726-residue polypeptide: Ribonuclease R (726 aa).

The RNB domain maps to 262 to 590; it reads RIDLRHLPFF…LVHRVIKNLL (329 aa). One can recognise an S1 motif domain in the interval 642–723; it reads GDVLTGVISN…NERKIELSLY (82 aa).

Belongs to the RNR ribonuclease family. RNase R subfamily. In terms of assembly, monomer.

It localises to the cytoplasm. The enzyme catalyses Exonucleolytic cleavage in the 3'- to 5'-direction to yield nucleoside 5'-phosphates.. In terms of biological role, 3'-5' exoribonuclease that releases 5'-nucleoside monophosphates and is involved in maturation of structured RNAs. The chain is Ribonuclease R from Buchnera aphidicola subsp. Schizaphis graminum (strain Sg).